The primary structure comprises 428 residues: Histidinol dehydrogenase (428 aa).

Residues tyrosine 127, glutamine 189, and asparagine 212 each coordinate NAD(+). 3 residues coordinate substrate: serine 235, glutamine 257, and histidine 260. Residues glutamine 257 and histidine 260 each coordinate Zn(2+). Active-site proton acceptor residues include glutamate 325 and histidine 326. Histidine 326, aspartate 359, glutamate 413, and histidine 418 together coordinate substrate. A Zn(2+)-binding site is contributed by aspartate 359. Position 418 (histidine 418) interacts with Zn(2+).

This sequence belongs to the histidinol dehydrogenase family. Zn(2+) is required as a cofactor.

The enzyme catalyses L-histidinol + 2 NAD(+) + H2O = L-histidine + 2 NADH + 3 H(+). The protein operates within amino-acid biosynthesis; L-histidine biosynthesis; L-histidine from 5-phospho-alpha-D-ribose 1-diphosphate: step 9/9. Functionally, catalyzes the sequential NAD-dependent oxidations of L-histidinol to L-histidinaldehyde and then to L-histidine. The polypeptide is Histidinol dehydrogenase (Prochlorococcus marinus subsp. pastoris (strain CCMP1986 / NIES-2087 / MED4)).